The following is a 477-amino-acid chain: RNA pseudouridine synthase 6, chloroplastic (477 aa).

A chloroplast-targeting transit peptide spans Met1–Ser52. One can recognise an S4 RNA-binding domain in the interval Glu98–Lys205. Residue Asp258 is part of the active site.

The protein belongs to the pseudouridine synthase RluA family.

It is found in the plastid. The protein localises to the chloroplast. The catalysed reaction is a uridine in RNA = a pseudouridine in RNA. The chain is RNA pseudouridine synthase 6, chloroplastic from Oryza sativa subsp. japonica (Rice).